A 538-amino-acid chain; its full sequence is Importin subunit alpha-6 (538 aa).

Residues M1–A58 form the IBB domain. Residues M1–L69 form a disordered region. Basic and acidic residues predominate over residues A7–Q46. The segment covering S56–L69 has biased composition (polar residues). ARM repeat units lie at residues N109–S149, S152–G191, P194–R234, K236–D275, N278–T317, D320–A360, T363–S402, and H406–K445.

The protein belongs to the importin alpha family. Forms a complex with importin subunit beta-1.

It localises to the nucleus envelope. In terms of biological role, binds to conventional NLS motifs and mediates nuclear protein import across the nuclear envelope. Acts as a cellular receptor for the nuclear import of the virD2 protein of Agrobacterium, but is not essential for Agrobacterium-mediated root transformation. The protein is Importin subunit alpha-6 of Arabidopsis thaliana (Mouse-ear cress).